The primary structure comprises 131 residues: MNISDPLGDMLTRIRNAQMRGMSKTTSPASKLRARVLDVLTDEGYIRGYAEIEKSGHKTLEIELKYYEGQPVISEIKRVSKPGRRVYSSVSDIPLVRNGLGISILSTSQGVMSDNAARAKNVGGEVLCRVF.

The protein belongs to the universal ribosomal protein uS8 family. In terms of assembly, part of the 30S ribosomal subunit. Contacts proteins S5 and S12.

Functionally, one of the primary rRNA binding proteins, it binds directly to 16S rRNA central domain where it helps coordinate assembly of the platform of the 30S subunit. This chain is Small ribosomal subunit protein uS8, found in Hyphomonas neptunium (strain ATCC 15444).